A 558-amino-acid chain; its full sequence is Probable beta-glucosidase btgE (558 aa).

The N-terminal stretch at 1–18 is a signal peptide; that stretch reads MKAAILATAAALTGSALA. Disordered stretches follow at residues 64–105 and 251–305; these read STPS…PETP and LPSS…QMGM. Composition is skewed to low complexity over residues 76–105 and 252–292; these read PETT…PETP and PSSS…SSSA. Residues 293–305 show a composition bias toward polar residues; that stretch reads EVPQTTGSGQMGM. Catalysis depends on Glu399, which acts as the Proton donor. Residue Glu495 is the Nucleophile of the active site.

Belongs to the glycosyl hydrolase 17 family.

It is found in the secreted. The protein localises to the cell wall. The enzyme catalyses Hydrolysis of terminal, non-reducing beta-D-glucosyl residues with release of beta-D-glucose.. It participates in glycan metabolism; cellulose degradation. Its function is as follows. Beta-glucosidases are one of a number of cellulolytic enzymes involved in the degradation of cellulosic biomass. Catalyzes the last step releasing glucose from the inhibitory cellobiose. This Aspergillus terreus (strain NIH 2624 / FGSC A1156) protein is Probable beta-glucosidase btgE (btgE).